Reading from the N-terminus, the 309-residue chain is Anamorsin (309 aa).

The tract at residues 6-172 (ISPGQLVAVF…KPNFEVGSSS (167 aa)) is N-terminal SAM-like domain. The tract at residues 173 to 222 (QLKLLHKKSSSVKPVVDPATAKLWTLSANDMEDDSMDLIDSDELLDPEDL) is linker. Serine 182, serine 183, and serine 213 each carry phosphoserine. [2Fe-2S] cluster contacts are provided by cysteine 235, cysteine 244, cysteine 247, and cysteine 249. Residues 235 to 249 (CGEGKKRKACKNCTC) form a fe-S binding site A region. The residue at position 269 (serine 269) is a Phosphoserine. The [4Fe-4S] cluster site is built by cysteine 271, cysteine 274, cysteine 282, and cysteine 285. Short sequence motifs (cx2C motif) lie at residues 271–274 (CGNC) and 282–285 (CANC). The segment at 271-285 (CGNCYLGDAFRCANC) is fe-S binding site B. Phosphoserine occurs at positions 302 and 304.

It belongs to the anamorsin family. As to quaternary structure, monomer. Interacts with NDOR1. Interacts with CHCHD4. [2Fe-2S] cluster serves as cofactor. It depends on [4Fe-4S] cluster as a cofactor.

The protein localises to the cytoplasm. It is found in the nucleus. Its subcellular location is the mitochondrion intermembrane space. Functionally, component of the cytosolic iron-sulfur (Fe-S) protein assembly (CIA) machinery required for the maturation of extramitochondrial Fe-S proteins. Part of an electron transfer chain functioning in an early step of cytosolic Fe-S biogenesis, facilitating the de novo assembly of a [4Fe-4S] cluster on the scaffold complex NUBP1-NUBP2. Electrons are transferred to CIAPIN1 from NADPH via the FAD- and FMN-containing protein NDOR1. NDOR1-CIAPIN1 are also required for the assembly of the diferric tyrosyl radical cofactor of ribonucleotide reductase (RNR), probably by providing electrons for reduction during radical cofactor maturation in the catalytic small subunit. Has anti-apoptotic effects in the cell. Involved in negative control of cell death upon cytokine withdrawal. Promotes development of hematopoietic cells. The sequence is that of Anamorsin from Rattus norvegicus (Rat).